The primary structure comprises 126 residues: Small ribosomal subunit protein eS6 (126 aa).

This sequence belongs to the eukaryotic ribosomal protein eS6 family.

This Methanothermobacter thermautotrophicus (strain ATCC 29096 / DSM 1053 / JCM 10044 / NBRC 100330 / Delta H) (Methanobacterium thermoautotrophicum) protein is Small ribosomal subunit protein eS6.